A 606-amino-acid polypeptide reads, in one-letter code: Probable methyltransferase PMT5 (606 aa).

Topologically, residues 1-20 (MRGSWYKSVSSVFGLRPRIR) are cytoplasmic. Residues 21–41 (GLLFFIVGVVALVTILAPLTS) form a helical; Signal-anchor for type II membrane protein membrane-spanning segment. Residues 42-606 (NSYDSSSSST…LVCQKPFIKK (565 aa)) are Lumenal-facing. 2 N-linked (GlcNAc...) asparagine glycosylation sites follow: asparagine 101 and asparagine 409.

The protein belongs to the methyltransferase superfamily.

It is found in the endoplasmic reticulum membrane. This chain is Probable methyltransferase PMT5, found in Arabidopsis thaliana (Mouse-ear cress).